The chain runs to 444 residues: UDP-N-acetylmuramate--L-alanine ligase (444 aa).

111 to 117 serves as a coordination point for ATP; the sequence is GAHGKTS.

This sequence belongs to the MurCDEF family.

It is found in the cytoplasm. It carries out the reaction UDP-N-acetyl-alpha-D-muramate + L-alanine + ATP = UDP-N-acetyl-alpha-D-muramoyl-L-alanine + ADP + phosphate + H(+). The protein operates within cell wall biogenesis; peptidoglycan biosynthesis. In terms of biological role, cell wall formation. This Leuconostoc mesenteroides subsp. mesenteroides (strain ATCC 8293 / DSM 20343 / BCRC 11652 / CCM 1803 / JCM 6124 / NCDO 523 / NBRC 100496 / NCIMB 8023 / NCTC 12954 / NRRL B-1118 / 37Y) protein is UDP-N-acetylmuramate--L-alanine ligase.